The sequence spans 322 residues: GRB2-related adaptor protein 2 (322 aa).

The region spanning Met1–Pro56 is the SH3 1 domain. Phosphotyrosine is present on Tyr45. The SH2 domain occupies Trp58–Thr149. Lys106 is subject to N6-acetyllysine. A disordered region spans residues Val143–Gln216. Over residues Gly148 to Ser163 the composition is skewed to basic and acidic residues. Ser186 bears the Phosphoserine mark. A compositionally biased stretch (low complexity) spans Pro193–Pro204. Ser230 carries the post-translational modification Phosphoserine. Position 254 is a phosphothreonine (Thr254). Residues Gly263–Arg322 enclose the SH3 2 domain.

The protein belongs to the GRB2/sem-5/DRK family. In terms of assembly, interacts with phosphorylated LAT and LAX1 upon TCR activation. Interacts with SHB. Interacts with PTPN23. Interacts with phosphorylated LIME1 upon TCR activation.

It is found in the nucleus. Its subcellular location is the cytoplasm. It localises to the endosome. In terms of biological role, interacts with SLP-76 to regulate NF-AT activation. Binds to tyrosine-phosphorylated shc. This Mus musculus (Mouse) protein is GRB2-related adaptor protein 2 (Grap2).